A 211-amino-acid chain; its full sequence is uncharacterized protein (211 aa).

A run of 3 helical transmembrane segments spans residues 22–42 (FINFVRIAICIVMVWIGGLKV), 111–131 (IIGATIVTVGLLTLSGIWFPV), and 133–153 (GMAGGLLTFGMSIVTLSFMIT).

The protein to E.coli YkgB. To H.influenzae HI_0219.

Its subcellular location is the cell membrane. This is an uncharacterized protein from Mannheimia haemolytica (Pasteurella haemolytica).